Reading from the N-terminus, the 266-residue chain is Small ribosomal subunit protein uS3 (266 aa).

One can recognise a KH type-2 domain in the interval 39-107 (VREYLKKKLK…PVHVNIEEIR (69 aa)). The segment at 214-266 (PVVEEVTEDKRPRRNARPGDRRPRRDGEGGAPGARRGGPRRGAGKPEDGKTGE) is disordered. 2 stretches are compositionally biased toward basic and acidic residues: residues 230–241 (RPGDRRPRRDGE) and 257–266 (GKPEDGKTGE).

The protein belongs to the universal ribosomal protein uS3 family. In terms of assembly, part of the 30S ribosomal subunit. Forms a tight complex with proteins S10 and S14.

Functionally, binds the lower part of the 30S subunit head. Binds mRNA in the 70S ribosome, positioning it for translation. In Burkholderia thailandensis (strain ATCC 700388 / DSM 13276 / CCUG 48851 / CIP 106301 / E264), this protein is Small ribosomal subunit protein uS3.